Here is a 366-residue protein sequence, read N- to C-terminus: 3-dehydroquinate synthase (366 aa).

NAD(+) is bound by residues 74 to 79 (SGEAAK), 108 to 112 (GVVGD), 132 to 133 (TT), lysine 144, lysine 153, and 171 to 174 (FLRT). The Zn(2+) site is built by glutamate 186, histidine 249, and histidine 266.

Belongs to the sugar phosphate cyclases superfamily. Dehydroquinate synthase family. Requires Co(2+) as cofactor. It depends on Zn(2+) as a cofactor. The cofactor is NAD(+).

It localises to the cytoplasm. It catalyses the reaction 7-phospho-2-dehydro-3-deoxy-D-arabino-heptonate = 3-dehydroquinate + phosphate. Its pathway is metabolic intermediate biosynthesis; chorismate biosynthesis; chorismate from D-erythrose 4-phosphate and phosphoenolpyruvate: step 2/7. Functionally, catalyzes the conversion of 3-deoxy-D-arabino-heptulosonate 7-phosphate (DAHP) to dehydroquinate (DHQ). The chain is 3-dehydroquinate synthase from Geobacillus thermodenitrificans (strain NG80-2).